Reading from the N-terminus, the 461-residue chain is Cysteine--tRNA ligase (461 aa).

Residue cysteine 28 coordinates Zn(2+). The 'HIGH' region motif lies at 30–40 (ITVYDLCHIGH). Positions 209, 234, and 238 each coordinate Zn(2+). The 'KMSKS' region signature appears at 266–270 (KMSKS). Lysine 269 is an ATP binding site.

This sequence belongs to the class-I aminoacyl-tRNA synthetase family. Monomer. Zn(2+) is required as a cofactor.

The protein localises to the cytoplasm. The catalysed reaction is tRNA(Cys) + L-cysteine + ATP = L-cysteinyl-tRNA(Cys) + AMP + diphosphate. The sequence is that of Cysteine--tRNA ligase from Escherichia coli O157:H7.